The chain runs to 1708 residues: 187-kDa microtubule-associated protein AIR9 (1708 aa).

Positions 67-93 are enriched in polar residues; that stretch reads SSLRVSGTTPVTIRRNSTGGVTENLAG. Residues 67–255 form a disordered region; sequence SSLRVSGTTP…KTSTPESRDS (189 aa). The span at 110–121 shows a compositional bias: basic and acidic residues; it reads DPVRRSLPELRK. Positions 122–134 are enriched in low complexity; sequence SSVSSLSAKTVSK. Residues 149-165 are compositionally biased toward polar residues; sequence GSRSLTKSTGFSLSKPE. Positions 173 to 234 are enriched in low complexity; sequence SVSVSSKRAP…SIRSKSFSSP (62 aa). 7 LRR repeats span residues 267 to 290, 291 to 315, 316 to 335, 337 to 359, 360 to 382, 384 to 402, and 403 to 425; these read AGDD…GLHL, SPNL…ILNR, VKVL…EPLE, CKML…LPQL, PNLE…SQPR, QVLA…FPYL, and PVLE…EAAS. 11 A9 repeats span residues 489 to 584, 601 to 682, 698 to 777, 793 to 878, 895 to 977, 994 to 1073, 1090 to 1167, 1183 to 1272, 1287 to 1365, 1382 to 1473, and 1489 to 1569; these read PSGY…FAIS, LNGE…QYKY, ITGD…VSTS, IVGD…VYVL, ITGD…RSCM, VVGA…AISE, FLGS…RSIR, IPDC…VVVI, VRVK…KMSE, FTGK…AYAE, and IEGQ…VSAS.

In terms of assembly, interacts with KCBP. In terms of tissue distribution, strongly expressed in dividing cells, like the meristemic region of the root tip.

The protein localises to the cytoplasm. It localises to the cell cortex. Its subcellular location is the cytoskeleton. It is found in the phragmoplast. Its function is as follows. Microtubule-associated protein that may be involved in the maturation of cell plates and proper insertion of cross-walls after cytokinesis. This chain is 187-kDa microtubule-associated protein AIR9, found in Arabidopsis thaliana (Mouse-ear cress).